We begin with the raw amino-acid sequence, 343 residues long: 4-hydroxy-2-oxovalerate aldolase 1 (343 aa).

The region spanning 8–260 (VTVHDMTLRD…ETGVDVAKIT (253 aa)) is the Pyruvate carboxyltransferase domain. 16 to 17 (RD) serves as a coordination point for substrate. D17 is a binding site for Mn(2+). H20 (proton acceptor) is an active-site residue. Substrate is bound by residues S170 and H199. Mn(2+)-binding residues include H199 and H201. Y290 is a binding site for substrate.

This sequence belongs to the 4-hydroxy-2-oxovalerate aldolase family.

The enzyme catalyses (S)-4-hydroxy-2-oxopentanoate = acetaldehyde + pyruvate. The protein is 4-hydroxy-2-oxovalerate aldolase 1 of Dechloromonas aromatica (strain RCB).